The following is a 141-amino-acid chain: Prefoldin subunit alpha (141 aa).

This sequence belongs to the prefoldin subunit alpha family. As to quaternary structure, heterohexamer of two alpha and four beta subunits.

It is found in the cytoplasm. In terms of biological role, molecular chaperone capable of stabilizing a range of proteins. Seems to fulfill an ATP-independent, HSP70-like function in archaeal de novo protein folding. The polypeptide is Prefoldin subunit alpha (pfdA) (Methanothermobacter thermautotrophicus (strain ATCC 29096 / DSM 1053 / JCM 10044 / NBRC 100330 / Delta H) (Methanobacterium thermoautotrophicum)).